We begin with the raw amino-acid sequence, 67 residues long: LPS-assembly lipoprotein LptM (67 aa).

Residues 1-19 form the signal peptide; sequence MKNVFKTLAVLLTLFSLTG. C20 carries the N-palmitoyl cysteine lipid modification. C20 is lipidated: S-diacylglycerol cysteine. A disordered region spans residues 26–67; that stretch reads LYFPPADKNAPPPTKKVDSQTQSTMPDKNDRATGDGPSQVNY.

This sequence belongs to the LptM family. In terms of assembly, interacts with the outer membrane embedded portion of the LPS translocon formed by LptD and LptE (LptDE).

Its subcellular location is the cell outer membrane. Component of the lipopolysaccharide (LPS) transport (Lpt) pathway that promotes efficient assembly of the outer membrane LPS translocon (LptDE) by the BAM complex. Facilitates oxidative maturation of LptD by stabilizing a conformation of the LPS translocon in which LptD can efficiently acquire native disulfide bonds, thereby activating the LPS translocon. In Salmonella typhi, this protein is LPS-assembly lipoprotein LptM.